The following is a 305-amino-acid chain: UDP-3-O-acyl-N-acetylglucosamine deacetylase (305 aa).

Zn(2+) is bound by residues His-79, His-238, and Asp-242. His-265 functions as the Proton donor in the catalytic mechanism.

Belongs to the LpxC family. Requires Zn(2+) as cofactor.

It catalyses the reaction a UDP-3-O-[(3R)-3-hydroxyacyl]-N-acetyl-alpha-D-glucosamine + H2O = a UDP-3-O-[(3R)-3-hydroxyacyl]-alpha-D-glucosamine + acetate. It functions in the pathway glycolipid biosynthesis; lipid IV(A) biosynthesis; lipid IV(A) from (3R)-3-hydroxytetradecanoyl-[acyl-carrier-protein] and UDP-N-acetyl-alpha-D-glucosamine: step 2/6. Catalyzes the hydrolysis of UDP-3-O-myristoyl-N-acetylglucosamine to form UDP-3-O-myristoylglucosamine and acetate, the committed step in lipid A biosynthesis. The polypeptide is UDP-3-O-acyl-N-acetylglucosamine deacetylase (Vibrio vulnificus (strain CMCP6)).